Reading from the N-terminus, the 162-residue chain is RNA pyrophosphohydrolase (162 aa).

One can recognise a Nudix hydrolase domain in the interval 11 to 155 (PYRPCVGIVL…KRAVYEEVVA (145 aa)). Residues 45 to 66 (GGIDEGEKPREAALRELWEETG) carry the Nudix box motif.

The protein belongs to the Nudix hydrolase family. RppH subfamily. A divalent metal cation is required as a cofactor.

Its function is as follows. Accelerates the degradation of transcripts by removing pyrophosphate from the 5'-end of triphosphorylated RNA, leading to a more labile monophosphorylated state that can stimulate subsequent ribonuclease cleavage. This chain is RNA pyrophosphohydrolase, found in Cereibacter sphaeroides (strain ATCC 17023 / DSM 158 / JCM 6121 / CCUG 31486 / LMG 2827 / NBRC 12203 / NCIMB 8253 / ATH 2.4.1.) (Rhodobacter sphaeroides).